Here is a 237-residue protein sequence, read N- to C-terminus: Undecaprenyl-diphosphatase (237 aa).

The next 7 helical transmembrane spans lie at 38-58 (QTAV…FDGI), 65-85 (WRII…GVLF), 92-112 (LFSS…ILMF), 126-146 (MSFL…FPGI), 166-186 (ALQY…ILGL), 191-211 (ITIL…YVLS), and 217-237 (GKIW…YLVG).

The protein belongs to the UppP family.

Its subcellular location is the cell inner membrane. The catalysed reaction is di-trans,octa-cis-undecaprenyl diphosphate + H2O = di-trans,octa-cis-undecaprenyl phosphate + phosphate + H(+). Functionally, catalyzes the dephosphorylation of undecaprenyl diphosphate (UPP). Confers resistance to bacitracin. This Thermotoga petrophila (strain ATCC BAA-488 / DSM 13995 / JCM 10881 / RKU-1) protein is Undecaprenyl-diphosphatase.